Reading from the N-terminus, the 996-residue chain is KK-1 biosynthesis cluster protein D (996 aa).

Disordered stretches follow at residues 307–333 (HDTD…PELD), 425–449 (EQDN…ARDL), 489–556 (AGVA…ALRA), and 571–602 (STHS…SLHS). Polar residues-rich tracts occupy residues 318–329 (PIRSNKLSQSKQ) and 428–439 (NQTNEEGTGEVQ). Basic and acidic residues-rich tracts occupy residues 440–449 (SQRDRRARDL) and 500–527 (RAAE…DKAA). Residues 572-590 (THSIHQRASVNTTAPTVAR) show a composition bias toward polar residues.

The protein operates within secondary metabolite biosynthesis. Its function is as follows. Part of the gene cluster that mediates the biosynthesis of KK-1, a novel cyclic depsipeptide with 10 residues which is a promising active compound with high activity against many plant pathogens, especially Botrytis cinerea. The role of kk1D in KK-1 biosynthesis has still to be determined. The nonribosomal peptide synthetase (NRPS) kk1B catalyzes the elongation and cyclization of the decapeptide chain composed of 1 D-lactic acid residue (D-Lac), 1 pipecolic acid residue (Pip), 1 aspartic acid residue (Asp), 1 isoleucine residue (Ile), 1 glycine residue (Gly), 1 tyrosine residue (Tyr) and 4 valine residues (Val). The Asp, Ile and 3 Val residues are N-methylated by the 5 methyltransferase domains from the NRPS (found in modules 3, 5, 6, 7 and 9), whereas the Tyr residue is O-methylated by the cluster encoded O-methyltransferase kk1A. The thioesterase kk1J is likely to be involved in the corrective mechanism of peptide chain synthesis. The D-lactate dehydrogenase kk1H is involved in the synthesis of D-lactic acid from pyruvic acid, which is recognized by the A domain of the first kk1B module. The pyrroline-5-carboxylate reductase kk1I is involved in the synthesis of the L-pipecolic acid residue of KK-1 from delta-1-pyrroline-5-carboxylate (P5C), a metabolic intermediate of lysine. It is still unclear how kk1C and kk1D are involved in the production of KK-1. The protein is KK-1 biosynthesis cluster protein D of Curvularia clavata.